Here is a 213-residue protein sequence, read N- to C-terminus: ATP-dependent Clp protease proteolytic subunit (213 aa).

Residue Ser-114 is the Nucleophile of the active site. The active site involves His-139.

The protein belongs to the peptidase S14 family. In terms of assembly, fourteen ClpP subunits assemble into 2 heptameric rings which stack back to back to give a disk-like structure with a central cavity, resembling the structure of eukaryotic proteasomes.

Its subcellular location is the cytoplasm. It catalyses the reaction Hydrolysis of proteins to small peptides in the presence of ATP and magnesium. alpha-casein is the usual test substrate. In the absence of ATP, only oligopeptides shorter than five residues are hydrolyzed (such as succinyl-Leu-Tyr-|-NHMec, and Leu-Tyr-Leu-|-Tyr-Trp, in which cleavage of the -Tyr-|-Leu- and -Tyr-|-Trp bonds also occurs).. In terms of biological role, cleaves peptides in various proteins in a process that requires ATP hydrolysis. Has a chymotrypsin-like activity. Plays a major role in the degradation of misfolded proteins. This chain is ATP-dependent Clp protease proteolytic subunit, found in Pseudomonas entomophila (strain L48).